We begin with the raw amino-acid sequence, 118 residues long: Holin-like protein CidA 2 (118 aa).

The next 4 membrane-spanning stretches (helical) occupy residues 5–27 (MLLLQVGVLYVFSLVGTWIQGVF), 31–50 (MPGSLIGMLMLFLLLSTRIL), 62–84 (LLVFLPLFLIPSTTGLMEYESFL), and 88–110 (GSIIFLLVVISTVVTLIVSGYIS).

Belongs to the CidA/LrgA family. CidA subfamily.

It is found in the cell membrane. Increases the activity of extracellular murein hydrolases possibly by mediating their export via hole formation. Inhibited by the antiholin-like proteins LrgAB. In an unstressed cell, the LrgAB products probably inhibit the function of the CidA protein. When a cell is stressed by the addition of antibiotics or by other factors in the environment, CidA possibly oligomerizes within the bacterial cell membrane, creating lesions that disrupt the proton motive force, which in turn results in loss of cell viability. These lesions are also hypothesized to regulate the subsequent cell lysis by either allowing the murein hydrolases access to the cell wall substrate and/or regulating their activity by a possible change in the cell wall pH that results from loss of membrane potential. The chain is Holin-like protein CidA 2 (cidA2) from Bacillus anthracis.